We begin with the raw amino-acid sequence, 138 residues long: Gastrula zinc finger protein XlCGF44.2 (138 aa).

5 consecutive C2H2-type zinc fingers follow at residues 5-27, 32-54, 60-82, 88-110, and 116-138; these read FACT…KRIH, FVCA…QRLH, FTCT…QQIH, YVCS…MKTH, and FACS…QESH.

Belongs to the krueppel C2H2-type zinc-finger protein family.

It localises to the nucleus. Functionally, may be involved in transcriptional regulation. This is Gastrula zinc finger protein XlCGF44.2 from Xenopus laevis (African clawed frog).